The primary structure comprises 726 residues: ORC ubiquitin ligase 1 (726 aa).

An RING-type; degenerate zinc finger spans residues 18–56; the sequence is CHICLGKVRQPVICINNHVFCSICIDLWLKNNSQCPACR. Coiled-coil stretches lie at residues 87–129 and 155–270; these read LRKT…TILD and ETVA…MNSI. Serine 210 is subject to Phosphoserine. Disordered stretches follow at residues 276–334 and 436–460; these read SADG…TSKA and NVSN…ECFS. Basic and acidic residues predominate over residues 280 to 290; that stretch reads KGSKGSEEDVV. The span at 304 to 318 shows a compositional bias: low complexity; the sequence is SSTSSSSHLAKPSSS. Residues 319–334 are compositionally biased toward polar residues; sequence RLCDTSSARQESTSKA. A compositionally biased stretch (basic and acidic residues) spans 446-457; the sequence is DISRSENEKKSE. Phosphoserine occurs at positions 526, 553, 561, 568, and 570. 2 disordered regions span residues 570–602 and 687–726; these read SSQG…DQLE and QSPW…ATKS. Positions 579–588 are enriched in basic and acidic residues; the sequence is EPDKLEEKTE. Residues 589 to 602 are compositionally biased toward polar residues; the sequence is LNLSKGSLTNDQLE. Low complexity predominate over residues 713-726; sequence SSLSSASPSKATKS. Serine 719 and serine 721 each carry phosphoserine.

Associates with ORC complex. Binds to chromatin; association is cell cycle-regulated, absent from mitotic chromosomes, is associated with chromatin from G1 and partially released from chromatin from mid S-phase. In terms of processing, auto-ubiquitinated.

It localises to the chromosome. It catalyses the reaction S-ubiquitinyl-[E2 ubiquitin-conjugating enzyme]-L-cysteine + [acceptor protein]-L-lysine = [E2 ubiquitin-conjugating enzyme]-L-cysteine + N(6)-ubiquitinyl-[acceptor protein]-L-lysine.. Functionally, E3 ubiquitin ligase essential for DNA replication origin activation during S phase. Acts as a replication origin selector which selects the origins to be fired and catalyzes the multi-mono-ubiquitination of a subset of chromatin-bound ORC3 and ORC5 during S-phase. This chain is ORC ubiquitin ligase 1, found in Homo sapiens (Human).